The sequence spans 481 residues: Cobyric acid synthase (481 aa).

Residues 244 to 431 enclose the GATase cobBQ-type domain; that stretch reads VLRVVIPVLP…LHGLFDAPEA (188 aa). The Nucleophile role is filled by Cys-325. His-423 is a catalytic residue.

This sequence belongs to the CobB/CobQ family. CobQ subfamily.

It participates in cofactor biosynthesis; adenosylcobalamin biosynthesis. Its function is as follows. Catalyzes amidations at positions B, D, E, and G on adenosylcobyrinic A,C-diamide. NH(2) groups are provided by glutamine, and one molecule of ATP is hydrogenolyzed for each amidation. The polypeptide is Cobyric acid synthase (Ralstonia nicotianae (strain ATCC BAA-1114 / GMI1000) (Ralstonia solanacearum)).